We begin with the raw amino-acid sequence, 560 residues long: Solute carrier family 22 member 6 (560 aa).

Over 1 to 15 the chain is Cytoplasmic; sequence MAFSDLLEQVGSTGR. The chain crosses the membrane as a helical span at residues 16-36; it reads FQVLHVTLLSMPILMMASHNL. Topologically, residues 37-143 are extracellular; sequence LQNFVAAVPP…LVCDYRALKQ (107 aa). The chain crosses the membrane as a helical span at residues 144 to 164; the sequence is MSQTTYMGGVLVGAIVFGGLS. The Cytoplasmic segment spans residues 165–170; the sequence is DRFGRR. The helical transmembrane segment at 171 to 191 threads the bilayer; sequence VLLLISNLMMAIGGTCVAFST. Residues 192 to 201 are Extracellular-facing; sequence SFTMFCVFRV. The helical transmembrane segment at 202–222 threads the bilayer; it reads CCGMALSGLVLNSFSLIVEWI. Residues 223–228 lie on the Cytoplasmic side of the membrane; sequence PTRVRT. A helical membrane pass occupies residues 229–249; it reads VVGTGTGYCYTTGQLILAAVA. The Extracellular portion of the chain corresponds to 250–256; that stretch reads YCIRDWR. Residues 257 to 277 traverse the membrane as a helical segment; the sequence is WLTLAVSLPFYVSFLYSWWFL. Residues 278–345 are Cytoplasmic-facing; it reads ESARWLVLTK…DLLRTSTMRT (68 aa). A helical membrane pass occupies residues 346 to 366; it reads ITICLSAVWFSTSFAYYGLSM. Over 367–374 the chain is Extracellular; sequence DLQKFGVS. The chain crosses the membrane as a helical span at residues 375–395; that stretch reads IYLIQIIFGAVDIPAKIIVTI. Residues 396 to 406 lie on the Cytoplasmic side of the membrane; it reads CMSMLGRRPSQ. A helical transmembrane segment spans residues 407 to 427; that stretch reads CGALVLAGIMILINLLVPSDL. At 428-433 the chain is on the extracellular side; it reads QMLRTS. Residues 434–454 traverse the membrane as a helical segment; that stretch reads LAVIGKGCLAASFNCCYLYAG. The Cytoplasmic segment spans residues 455–465; that stretch reads ELYPTVIRQSG. A helical transmembrane segment spans residues 466-486; sequence MGWVSMMARFGAMVAPMVLLL. The Extracellular segment spans residues 487–491; it reads GDDYP. Residues 492–512 form a helical membrane-spanning segment; that stretch reads WIPGFIYGGAPIVSGIFAFFL. The Cytoplasmic portion of the chain corresponds to 513 to 560; sequence PETLSQPLPDTIQDIDDRGLARTNSKRLPEKLDLAMKDPSCVLLKESV.

It belongs to the major facilitator (TC 2.A.1) superfamily. Organic cation transporter (TC 2.A.1.19) family. Post-translationally, glycosylated. Glycosylation is necessary for proper targeting of the transporter to the plasma membrane.

It is found in the cell membrane. It localises to the basolateral cell membrane. The protein localises to the basal cell membrane. Its function is as follows. Involved in the renal elimination of endogenous and exogenous organic anions. Functions as organic anion exchanger when the uptake of one molecule of organic anion is coupled with an efflux of one molecule of endogenous dicarboxylic acid (glutarate, ketoglutarate, etc). Mediates the sodium-independent uptake of p-aminohippurate (PAH), 2,3-dimercapto-1-propanesulfonic acid (DMPS), cidofovir, adefovir, 9-(2-phosphonylmethoxyethyl) guanine (PMEG), 9-(2-phosphonylmethoxyethyl) diaminopurine (PMEDAP), ochratoxin (OTA), acyclovir (ACV), 3'-azido-3-'deoxythymidine (AZT), cimetidine (CMD), 2,4-dichloro-phenoxyacetate (2,4-D), hippurate (HA), indoleacetate (IA), indoxyl sulfate (IS) and 3-carboxy-4-methyl-5-propyl-2-furanpropionate (CMPF) and edaravone sulfate. PAH uptake is inhibited by p-chloromercuribenzenesulphonate (PCMBS), diethyl pyrocarbonate (DEPC), indomethacin, sulindac, diclofenac, carprofen, okadaic acid, benzothiazolylcysteine (BTC), S-chlorotrifluoroethylcysteine (CTFC), cysteine S-conjugates S-dichlorovinylcysteine (DCVC), furosemide, steviol, phorbol 12-myristate 13-acetate (PMA), calcium ionophore A23187, benzylpenicillin, bumetamide, losartan, probenecid, phenol red, urate, glutarate and alpha-ketoglutarate. The polypeptide is Solute carrier family 22 member 6 (slc22a6) (Danio rerio (Zebrafish)).